The following is a 590-amino-acid chain: L-fucose isomerase (590 aa).

Catalysis depends on proton acceptor residues Glu-337 and Asp-361. Positions 337, 361, and 528 each coordinate Mn(2+).

The protein belongs to the L-fucose isomerase family. Mn(2+) is required as a cofactor.

It is found in the cytoplasm. The catalysed reaction is L-fucose = L-fuculose. The protein operates within carbohydrate degradation; L-fucose degradation; L-lactaldehyde and glycerone phosphate from L-fucose: step 1/3. Converts the aldose L-fucose into the corresponding ketose L-fuculose. This chain is L-fucose isomerase, found in Bacteroides fragilis (strain ATCC 25285 / DSM 2151 / CCUG 4856 / JCM 11019 / LMG 10263 / NCTC 9343 / Onslow / VPI 2553 / EN-2).